A 451-amino-acid polypeptide reads, in one-letter code: Chromosomal replication initiator protein DnaA (451 aa).

The interval Met-1–Arg-72 is domain I, interacts with DnaA modulators. The tract at residues Arg-72–His-108 is domain II. Positions Met-109 to Ser-325 are domain III, AAA+ region. ATP is bound by residues Gly-153, Gly-155, Lys-156, and Thr-157. Positions Ser-326–Phe-451 are domain IV, binds dsDNA.

This sequence belongs to the DnaA family. Oligomerizes as a right-handed, spiral filament on DNA at oriC.

Its subcellular location is the cytoplasm. In terms of biological role, plays an essential role in the initiation and regulation of chromosomal replication. ATP-DnaA binds to the origin of replication (oriC) to initiate formation of the DNA replication initiation complex once per cell cycle. Binds the DnaA box (a 9 base pair repeat at the origin) and separates the double-stranded (ds)DNA. Forms a right-handed helical filament on oriC DNA; dsDNA binds to the exterior of the filament while single-stranded (ss)DNA is stabiized in the filament's interior. The ATP-DnaA-oriC complex binds and stabilizes one strand of the AT-rich DNA unwinding element (DUE), permitting loading of DNA polymerase. After initiation quickly degrades to an ADP-DnaA complex that is not apt for DNA replication. Binds acidic phospholipids. In Listeria monocytogenes serotype 4b (strain F2365), this protein is Chromosomal replication initiator protein DnaA.